The primary structure comprises 550 residues: 4-coumarate--CoA ligase-like 8 (550 aa).

Residues Ser-207, Ser-208, Gly-209, Thr-210, Thr-211, and Lys-215 each coordinate ATP. Phe-253 is a (E)-4-coumaroyl-AMP binding site. Arg-274 lines the CoA pocket. Positions 276–347 are SBD1; sequence DLGEMMAAVE…KKYPTVDVYQ (72 aa). Positions 325, 347, 348, and 352 each coordinate (E)-4-coumaroyl-AMP. ATP contacts are provided by Gln-347, Gly-348, Thr-352, Asp-430, and Arg-445. An SBD2 region spans residues 348 to 412; it reads GYALTESNGA…LKGPSIAKGY (65 aa). (E)-4-coumaroyl-AMP contacts are provided by Lys-447 and Lys-451. CoA contacts are provided by Lys-453 and Gly-454. Lys-536 contributes to the ATP binding site. The short motif at 548–550 is the Microbody targeting signal element; that stretch reads SKI.

Belongs to the ATP-dependent AMP-binding enzyme family. It depends on Mg(2+) as a cofactor.

It is found in the peroxisome. The enzyme catalyses (E)-4-coumarate + ATP + CoA = (E)-4-coumaroyl-CoA + AMP + diphosphate. The catalysed reaction is (E)-4-coumarate + ATP + H(+) = (E)-4-coumaroyl-AMP + diphosphate. It catalyses the reaction (E)-4-coumaroyl-AMP + CoA = (E)-4-coumaroyl-CoA + AMP + H(+). In terms of biological role, carboxylate--CoA ligase that may use 4-coumarate as substrate. Follows a two-step reaction mechanism, wherein the carboxylate substrate first undergoes adenylation by ATP, followed by a thioesterification in the presence of CoA to yield the final CoA thioester. In Arabidopsis thaliana (Mouse-ear cress), this protein is 4-coumarate--CoA ligase-like 8.